The sequence spans 378 residues: POU domain, class 3, transcription factor 2 (378 aa).

Disordered stretches follow at residues 1–28 (MATT…SMQQ), 86–118 (SPRD…HDSR), and 151–205 (LIPG…TPTS). Over residues 164–181 (MRDAHEDHHSPHLSDHGH) the composition is skewed to basic and acidic residues. One can recognise a POU-specific domain in the interval 200–274 (EDTPTSDDLE…LLNKWLEEAD (75 aa)). S279 is modified (phosphoserine). The segment at residues 292–351 (KRKKRTSIEVSVKGALESHFLKCPKPAASEITSLADSLQLEKEVVRVWFCNRRQKEKRMT) is a DNA-binding region (homeobox). A disordered region spans residues 347-378 (EKRMTPPGGPLPGTEDVYGDTPPHHGVQTPVQ).

The protein belongs to the POU transcription factor family. Class-3 subfamily. In terms of tissue distribution, predominantly expressed in the central nervous system, with strong expression in the cerebellum.

It is found in the nucleus. Its function is as follows. Transcription factor that may play important roles in patterning the embryonic brain. This chain is POU domain, class 3, transcription factor 2 (pou3f2), found in Danio rerio (Zebrafish).